The chain runs to 440 residues: Streptokinase G (440 aa).

An N-terminal signal peptide occupies residues 1-26; sequence MKNYLSFGMFALLFALTFGTVNSVQA.

Its function is as follows. This protein is not a protease, but it activates plasminogen by complexing with it. As a potential virulence factor, it is thought to prevent the formation of effective fibrin barriers around the site of infection, thereby contributing to the invasiveness of the cells. This Streptococcus sp. (strain 19909) protein is Streptokinase G (skg).